Consider the following 359-residue polypeptide: Probable tyrosine-protein phosphatase pir-2 (359 aa).

Residues 16–191 enclose the Tyrosine-protein phosphatase domain; the sequence is QPVGNVIPRT…AKDKRDKQVD (176 aa). Residue cysteine 131 is the Phosphocysteine intermediate of the active site. The segment covering 184 to 199 has biased composition (basic and acidic residues); it reads DKRDKQVDSDSDSSER. 3 disordered regions span residues 184-211, 234-259, and 274-328; these read DKRDKQVDSDSDSSERQRKKKNKRKHRE, SVSGTDYQNSPNGVSVDPGQPQPHHW, and PVAN…RNRM. The segment covering 200 to 210 has biased composition (basic residues); it reads QRKKKNKRKHR. The segment covering 234 to 246 has biased composition (polar residues); it reads SVSGTDYQNSPNG. Residues 290–309 show a composition bias toward acidic residues; the sequence is PQEEEEFEEDFEEIEEETET. The span at 319–328 shows a compositional bias: basic residues; the sequence is SKRRARRNRM.

The protein belongs to the protein-tyrosine phosphatase family. Non-receptor class CDC14 subfamily.

The enzyme catalyses O-phospho-L-tyrosyl-[protein] + H2O = L-tyrosyl-[protein] + phosphate. This is Probable tyrosine-protein phosphatase pir-2 from Caenorhabditis elegans.